The following is a 179-amino-acid chain: Large ribosomal subunit protein uL5 (179 aa).

It belongs to the universal ribosomal protein uL5 family. As to quaternary structure, part of the 50S ribosomal subunit; part of the 5S rRNA/L5/L18/L25 subcomplex. Contacts the 5S rRNA and the P site tRNA. Forms a bridge to the 30S subunit in the 70S ribosome.

Functionally, this is one of the proteins that bind and probably mediate the attachment of the 5S RNA into the large ribosomal subunit, where it forms part of the central protuberance. In the 70S ribosome it contacts protein S13 of the 30S subunit (bridge B1b), connecting the 2 subunits; this bridge is implicated in subunit movement. Contacts the P site tRNA; the 5S rRNA and some of its associated proteins might help stabilize positioning of ribosome-bound tRNAs. The protein is Large ribosomal subunit protein uL5 of Burkholderia vietnamiensis (strain G4 / LMG 22486) (Burkholderia cepacia (strain R1808)).